A 1132-amino-acid chain; its full sequence is Telomerase reverse transcriptase (1132 aa).

Residues 1–66 (MSAKKPVQSK…NQNNANSGGN (66 aa)) are disordered. 2 stretches are compositionally biased toward polar residues: residues 9–26 (SKLN…NRST) and 45–55 (QSQNTTTGAFR). Residues 602–956 (KEMRIFCESQ…DLFHWIGISI (355 aa)) enclose the Reverse transcriptase domain. Positions 708, 886, and 887 each coordinate Mg(2+).

Belongs to the reverse transcriptase family. Telomerase subfamily.

It localises to the nucleus. The protein localises to the chromosome. Its subcellular location is the telomere. The enzyme catalyses DNA(n) + a 2'-deoxyribonucleoside 5'-triphosphate = DNA(n+1) + diphosphate. Telomerase is a ribonucleoprotein enzyme essential for the replication of chromosome termini in most eukaryotes. It elongates telomeres. It is a reverse transcriptase that adds simple sequence repeats to chromosome ends by copying a template sequence within the RNA component of the enzyme. The polypeptide is Telomerase reverse transcriptase (TERT) (Oxytricha trifallax (Sterkiella histriomuscorum)).